A 98-amino-acid chain; its full sequence is Small ribosomal subunit protein bS6 (98 aa).

The protein belongs to the bacterial ribosomal protein bS6 family.

Functionally, binds together with bS18 to 16S ribosomal RNA. The sequence is that of Small ribosomal subunit protein bS6 from Levilactobacillus brevis (strain ATCC 367 / BCRC 12310 / CIP 105137 / JCM 1170 / LMG 11437 / NCIMB 947 / NCTC 947) (Lactobacillus brevis).